The following is a 178-amino-acid chain: Imidazoleglycerol-phosphate dehydratase (178 aa).

Belongs to the imidazoleglycerol-phosphate dehydratase family.

Its subcellular location is the cytoplasm. The catalysed reaction is D-erythro-1-(imidazol-4-yl)glycerol 3-phosphate = 3-(imidazol-4-yl)-2-oxopropyl phosphate + H2O. Its pathway is amino-acid biosynthesis; L-histidine biosynthesis; L-histidine from 5-phospho-alpha-D-ribose 1-diphosphate: step 6/9. This is Imidazoleglycerol-phosphate dehydratase from Archaeoglobus fulgidus (strain ATCC 49558 / DSM 4304 / JCM 9628 / NBRC 100126 / VC-16).